An 89-amino-acid polypeptide reads, in one-letter code: Small ribosomal subunit protein uS15 (89 aa).

It belongs to the universal ribosomal protein uS15 family. Part of the 30S ribosomal subunit. Forms a bridge to the 50S subunit in the 70S ribosome, contacting the 23S rRNA.

One of the primary rRNA binding proteins, it binds directly to 16S rRNA where it helps nucleate assembly of the platform of the 30S subunit by binding and bridging several RNA helices of the 16S rRNA. Its function is as follows. Forms an intersubunit bridge (bridge B4) with the 23S rRNA of the 50S subunit in the ribosome. The chain is Small ribosomal subunit protein uS15 from Gloeothece citriformis (strain PCC 7424) (Cyanothece sp. (strain PCC 7424)).